Reading from the N-terminus, the 123-residue chain is Large ribosomal subunit protein bL12 (123 aa).

This sequence belongs to the bacterial ribosomal protein bL12 family. As to quaternary structure, homodimer. Part of the ribosomal stalk of the 50S ribosomal subunit. Forms a multimeric L10(L12)X complex, where L10 forms an elongated spine to which 2 to 4 L12 dimers bind in a sequential fashion. Binds GTP-bound translation factors.

In terms of biological role, forms part of the ribosomal stalk which helps the ribosome interact with GTP-bound translation factors. Is thus essential for accurate translation. This Clostridium acetobutylicum (strain ATCC 824 / DSM 792 / JCM 1419 / IAM 19013 / LMG 5710 / NBRC 13948 / NRRL B-527 / VKM B-1787 / 2291 / W) protein is Large ribosomal subunit protein bL12.